Here is a 375-residue protein sequence, read N- to C-terminus: E3 ubiquitin-protein ligase IE2 (375 aa).

The span at 1 to 12 (MSRINNADTPTN) shows a compositional bias: polar residues. Disordered stretches follow at residues 1-61 (MSRI…VGDR) and 115-142 (LTTT…DYNS). Residues 177 to 225 (CHICSCTFTDIKNYNSNFVTSSECNHAVCFKCYVSIVFNKEAYKCSICN) form an RING-type zinc finger. A coiled-coil region spans residues 272–348 (KTIIEELQLE…TFLQNQLDAQ (77 aa)).

This sequence belongs to the alphabaculovirus IE2 protein family. Homooligomer. Auto-ubiquitinated.

The protein localises to the host nucleus. The enzyme catalyses S-ubiquitinyl-[E2 ubiquitin-conjugating enzyme]-L-cysteine + [acceptor protein]-L-lysine = [E2 ubiquitin-conjugating enzyme]-L-cysteine + N(6)-ubiquitinyl-[acceptor protein]-L-lysine.. Its function is as follows. RING-finger E3 ubiquitin ligase that plays an important regulatory role during the initial stages of infection. Migrates to specific nuclear foci early in infection supposely to prepare the sites for viral replication by targeting and ubiquitinating host proteins. This is E3 ubiquitin-protein ligase IE2 (IE2) from Hyphantria cunea nuclear polyhedrosis virus (HcNPV).